The chain runs to 300 residues: Ribosomal RNA small subunit methyltransferase H (300 aa).

Residues 35 to 37 (GGH), D55, F82, D100, and Q107 each bind S-adenosyl-L-methionine.

This sequence belongs to the methyltransferase superfamily. RsmH family.

The protein resides in the cytoplasm. The catalysed reaction is cytidine(1402) in 16S rRNA + S-adenosyl-L-methionine = N(4)-methylcytidine(1402) in 16S rRNA + S-adenosyl-L-homocysteine + H(+). Specifically methylates the N4 position of cytidine in position 1402 (C1402) of 16S rRNA. The sequence is that of Ribosomal RNA small subunit methyltransferase H from Chlamydia trachomatis serovar A (strain ATCC VR-571B / DSM 19440 / HAR-13).